Reading from the N-terminus, the 242-residue chain is Segregation and condensation protein A (242 aa).

It belongs to the ScpA family. Component of a cohesin-like complex composed of ScpA, ScpB and the Smc homodimer, in which ScpA and ScpB bind to the head domain of Smc. The presence of the three proteins is required for the association of the complex with DNA.

The protein localises to the cytoplasm. Its function is as follows. Participates in chromosomal partition during cell division. May act via the formation of a condensin-like complex containing Smc and ScpB that pull DNA away from mid-cell into both cell halves. The chain is Segregation and condensation protein A from Lactococcus lactis subsp. lactis (strain IL1403) (Streptococcus lactis).